Reading from the N-terminus, the 82-residue chain is Myosin light chain alkali (82 aa).

Positions 7 to 42 constitute an EF-hand domain; the sequence is GCYEDFIECLKLYDKEENGTMMLAELQHALLALGES.

Myosin is a hexamer of 2 heavy chains and 4 light chains.

In Drosophila mauritiana (Fruit fly), this protein is Myosin light chain alkali (Mlc1).